The sequence spans 404 residues: uncharacterized protein (404 aa).

Disordered stretches follow at residues 261 to 307 (VSTG…SPSL) and 320 to 340 (KKSH…GGAD). 3 positions are modified to phosphoserine: Ser-267, Ser-276, and Ser-279. Phosphothreonine is present on residues Thr-290 and Thr-293. 5 positions are modified to phosphoserine: Ser-304, Ser-306, Ser-324, Ser-358, and Ser-362. Positions 320 to 336 (KKSHSANDSEEFFREDD) are enriched in basic and acidic residues.

This is an uncharacterized protein from Homo sapiens (Human).